A 185-amino-acid polypeptide reads, in one-letter code: Jasmonate-induced protein homolog (185 aa).

The protein belongs to the jasmonate-induced protein family.

The sequence is that of Jasmonate-induced protein homolog from Atriplex canescens (Fourwing saltbush).